The primary structure comprises 1182 residues: Rho guanine nucleotide exchange factor osg-1 (1182 aa).

A compositionally biased stretch (acidic residues) spans 1–12 (MLNPNDADDSDS). The disordered stretch occupies residues 1–96 (MLNPNDADDS…TNSEPNVDMP (96 aa)). Polar residues predominate over residues 29 to 41 (ATVSPSTRNSFYN). Residues 69–78 (ASRERSESRR) are compositionally biased toward basic and acidic residues. Residues 357–544 (VRHLAARELL…HCLAVAINQH (188 aa)) enclose the DH domain. Residues 637–669 (EDVQISKDTLSQLEEVERKLESSREDDRVLKKM) are a coiled coil. Residues 863-884 (INSSGSDTESSSDEGTSTAGQT) form a disordered region. The segment covering 865-879 (SSGSDTESSSDEGTS) has biased composition (low complexity). Residues 897–922 (VVNSTERVRSRARDRLARLRNSITSI) are a coiled coil.

As to expression, expressed in muscles in the body wall and head, and in the nervous system in neurons including FLP and ASE neurons in the head.

Its function is as follows. Probable guanine nucleotide exchange factor which regulates the Rho GTPase rho-1. Functions in ASE sensory neurons where it promotes neuronal degeneration under conditions of oxidative stress. The protein is Rho guanine nucleotide exchange factor osg-1 of Caenorhabditis elegans.